A 551-amino-acid chain; its full sequence is Putative BTB/POZ domain-containing protein L76 (551 aa).

The BTB domain occupies 19-90 (TDIILEIEDD…FYGQENDVID (72 aa)).

The protein belongs to the mimivirus BTB/WD family.

This is Putative BTB/POZ domain-containing protein L76 from Acanthamoeba polyphaga (Amoeba).